We begin with the raw amino-acid sequence, 538 residues long: Chaperonin GroEL (538 aa).

ATP contacts are provided by residues 29-32 (TLGP), 86-90 (DGTTT), G413, 479-481 (DAL), and D495.

It belongs to the chaperonin (HSP60) family. As to quaternary structure, forms a cylinder of 14 subunits composed of two heptameric rings stacked back-to-back. Interacts with the co-chaperonin GroES.

The protein localises to the cytoplasm. It carries out the reaction ATP + H2O + a folded polypeptide = ADP + phosphate + an unfolded polypeptide.. In terms of biological role, together with its co-chaperonin GroES, plays an essential role in assisting protein folding. The GroEL-GroES system forms a nano-cage that allows encapsulation of the non-native substrate proteins and provides a physical environment optimized to promote and accelerate protein folding. The chain is Chaperonin GroEL from Thermotoga petrophila (strain ATCC BAA-488 / DSM 13995 / JCM 10881 / RKU-1).